Consider the following 440-residue polypeptide: 23S rRNA (uracil(1939)-C(5))-methyltransferase RlmD (440 aa).

The region spanning 10-68 is the TRAM domain; that stretch reads KALPTQAVEITIDNLDHHLTGVGRYQGKACFVEGVLPGEKVSVQITEQKKQYAHARLRQ. Residues Cys81, Cys87, Cys90, and Cys169 each contribute to the [4Fe-4S] cluster site. Positions 272, 301, 306, 322, 349, and 372 each coordinate S-adenosyl-L-methionine. Cys398 (nucleophile) is an active-site residue.

This sequence belongs to the class I-like SAM-binding methyltransferase superfamily. RNA M5U methyltransferase family. RlmD subfamily.

It catalyses the reaction uridine(1939) in 23S rRNA + S-adenosyl-L-methionine = 5-methyluridine(1939) in 23S rRNA + S-adenosyl-L-homocysteine + H(+). Catalyzes the formation of 5-methyl-uridine at position 1939 (m5U1939) in 23S rRNA. This Tolumonas auensis (strain DSM 9187 / NBRC 110442 / TA 4) protein is 23S rRNA (uracil(1939)-C(5))-methyltransferase RlmD.